The chain runs to 388 residues: 4-hydroxy-3-methylbut-2-en-1-yl diphosphate synthase (flavodoxin) (388 aa).

Residues C281, C284, C316, and E323 each coordinate [4Fe-4S] cluster.

Belongs to the IspG family. The cofactor is [4Fe-4S] cluster.

The enzyme catalyses (2E)-4-hydroxy-3-methylbut-2-enyl diphosphate + oxidized [flavodoxin] + H2O + 2 H(+) = 2-C-methyl-D-erythritol 2,4-cyclic diphosphate + reduced [flavodoxin]. Its pathway is isoprenoid biosynthesis; isopentenyl diphosphate biosynthesis via DXP pathway; isopentenyl diphosphate from 1-deoxy-D-xylulose 5-phosphate: step 5/6. In terms of biological role, converts 2C-methyl-D-erythritol 2,4-cyclodiphosphate (ME-2,4cPP) into 1-hydroxy-2-methyl-2-(E)-butenyl 4-diphosphate. In Arthrobacter sp. (strain FB24), this protein is 4-hydroxy-3-methylbut-2-en-1-yl diphosphate synthase (flavodoxin).